Consider the following 254-residue polypeptide: MPAGSMSTTGYPGVCSTTSYRTHCYIPVTSSVTLSSSDLSPTFGHCLPSSYQGNLWLLDYCQESYGEAPTCKSPSCEPKTCSTTGCDPSNSSVPCNSPSAGQVFSVCETTNVSPSPSCSPSTQTNGYVCNCHIPTRNASKACQTLRNGSNCFGQLNCLSKSFQTLNHCRLSTLGYKSYQNPCFIPSYVSPLCYISNSCQPQSYLVRNYHYSSYRPTSCRPLSYLSRSFRSLSYIPSTFPPLRYLCSGSRPLKCY.

A run of 6 repeats spans residues 193 to 202 (YISNSCQPQS), 203 to 212 (YLVRNYHYSS), 213 to 222 (YRPTSCRPLS), 223 to 232 (YLSRSFRSLS), 233 to 242 (YIPSTFPPLR), and 243 to 252 (YLCSGSRPLK). Residues 193 to 252 (YISNSCQPQSYLVRNYHYSSYRPTSCRPLSYLSRSFRSLSYIPSTFPPLRYLCSGSRPLK) are 6 X 10 AA repeats of Y-[ILR]-[SVPC]-[NRTS]-[SNTG]-X-[QHRP]-[PSY]-[QSL]-[SRK].

Belongs to the PMG family. In terms of assembly, interacts with hair keratins. Specific expression in the middle/upper hair cuticle.

In the hair cortex, hair keratin intermediate filaments are embedded in an interfilamentous matrix, consisting of hair keratin-associated proteins (KRTAP), which are essential for the formation of a rigid and resistant hair shaft through their extensive disulfide bond cross-linking with abundant cysteine residues of hair keratins. The matrix proteins include the high-sulfur and high-glycine-tyrosine keratins. The protein is Keratin-associated protein 24-1 (KRTAP24-1) of Homo sapiens (Human).